The sequence spans 222 residues: uncharacterized protein (222 aa).

G2 is lipidated: N-myristoyl glycine; by host.

This sequence belongs to the mimivirus R683/R861 family.

This is an uncharacterized protein from Acanthamoeba polyphaga mimivirus (APMV).